The primary structure comprises 276 residues: N-acyl homoserine lactonase AiiB (276 aa).

Zn(2+) contacts are provided by H111, H113, H116, H191, D213, and H259.

Belongs to the metallo-beta-lactamase superfamily. Requires Zn(2+) as cofactor.

The enzyme catalyses an N-acyl-L-homoserine lactone + H2O = an N-acyl-L-homoserine + H(+). This Rhizobium rhizogenes (strain K84 / ATCC BAA-868) (Agrobacterium radiobacter) protein is N-acyl homoserine lactonase AiiB.